The sequence spans 378 residues: Cobalt-precorrin-5B C(1)-methyltransferase (378 aa).

It belongs to the CbiD family.

It catalyses the reaction Co-precorrin-5B + S-adenosyl-L-methionine = Co-precorrin-6A + S-adenosyl-L-homocysteine. It participates in cofactor biosynthesis; adenosylcobalamin biosynthesis; cob(II)yrinate a,c-diamide from sirohydrochlorin (anaerobic route): step 6/10. Its function is as follows. Catalyzes the methylation of C-1 in cobalt-precorrin-5B to form cobalt-precorrin-6A. In Photorhabdus laumondii subsp. laumondii (strain DSM 15139 / CIP 105565 / TT01) (Photorhabdus luminescens subsp. laumondii), this protein is Cobalt-precorrin-5B C(1)-methyltransferase.